The following is a 130-amino-acid chain: Fluoride-specific ion channel FluC 2 (130 aa).

Helical transmembrane passes span 4–24 (GLST…GAIC), 38–58 (NLWG…FFLA), 72–92 (LYLL…SLIL), and 103–123 (WMEL…FISL). Residues glycine 82 and serine 85 each contribute to the Na(+) site.

This sequence belongs to the fluoride channel Fluc/FEX (TC 1.A.43) family.

The protein resides in the cell inner membrane. The enzyme catalyses fluoride(in) = fluoride(out). Na(+) is not transported, but it plays an essential structural role and its presence is essential for fluoride channel function. In terms of biological role, fluoride-specific ion channel. Important for reducing fluoride concentration in the cell, thus reducing its toxicity. In Prochlorococcus marinus (strain SARG / CCMP1375 / SS120), this protein is Fluoride-specific ion channel FluC 2.